The following is a 77-amino-acid chain: UPF0291 protein EAT1b_0405 (77 aa).

Residues 53-77 (KVVDPDGNDVTPEKLKEDQKRYRGE) are disordered. Over residues 63 to 77 (TPEKLKEDQKRYRGE) the composition is skewed to basic and acidic residues.

It belongs to the UPF0291 family.

It is found in the cytoplasm. The sequence is that of UPF0291 protein EAT1b_0405 from Exiguobacterium sp. (strain ATCC BAA-1283 / AT1b).